Reading from the N-terminus, the 696-residue chain is Carotenoid dioxygenase carX (696 aa).

Polar residues predominate over residues 1-16 (MKFLQQNSFTQTSMSQ). Residues 1 to 27 (MKFLQQNSFTQTSMSQPHEDVSPPLRH) form a disordered region. Fe(2+)-binding residues include histidine 244, histidine 298, histidine 361, and histidine 642.

This sequence belongs to the carotenoid oxygenase family. It depends on Fe(2+) as a cofactor.

The enzyme catalyses all-trans-beta-carotene + O2 = 2 all-trans-retinal. The protein operates within carotenoid biosynthesis. Carotenoid dioxygenase; part of the car gene cluster that mediates the biosynthesis of neurosporaxanthin, a carboxylic apocarotenoid acting as an essential protective pigments and leading to orange pigmentation. CarX mediates the cleavage of beta-carotene produced by carAR into retinal, the rhodopsin's chromophore that is involved in the regulation of the carotenoid biosynthetic pathway via a negative feedback mechanism. It can also convert the synthetic compound beta-apo-8'-carotenal but not C35-apocarotenoids such as the acidic apocarotenoid neurosporaxanthin (C35), as well as its corresponding aldehyde beta-apo-4'-carotenal. This is Carotenoid dioxygenase carX from Gibberella fujikuroi (strain CBS 195.34 / IMI 58289 / NRRL A-6831) (Bakanae and foot rot disease fungus).